The sequence spans 644 residues: Acetyl-coenzyme A synthetase (644 aa).

CoA contacts are provided by residues 189–192 and Thr-307; that span reads RGGK. Residues 383–385, 407–412, Asp-496, and Arg-511 each bind ATP; these read GEP and DTWWQT. Ser-519 contacts CoA. Residue Arg-522 coordinates ATP. The Mg(2+) site is built by Val-533, His-535, and Val-538. Arg-580 provides a ligand contact to CoA. N6-acetyllysine is present on Lys-605.

This sequence belongs to the ATP-dependent AMP-binding enzyme family. It depends on Mg(2+) as a cofactor. Post-translationally, acetylated. Deacetylation by the SIR2-homolog deacetylase activates the enzyme.

The enzyme catalyses acetate + ATP + CoA = acetyl-CoA + AMP + diphosphate. Its function is as follows. Catalyzes the conversion of acetate into acetyl-CoA (AcCoA), an essential intermediate at the junction of anabolic and catabolic pathways. AcsA undergoes a two-step reaction. In the first half reaction, AcsA combines acetate with ATP to form acetyl-adenylate (AcAMP) intermediate. In the second half reaction, it can then transfer the acetyl group from AcAMP to the sulfhydryl group of CoA, forming the product AcCoA. The sequence is that of Acetyl-coenzyme A synthetase from Rubrobacter xylanophilus (strain DSM 9941 / JCM 11954 / NBRC 16129 / PRD-1).